A 282-amino-acid polypeptide reads, in one-letter code: Probable protein phosphatase 2C 45 (282 aa).

The PPM-type phosphatase domain occupies 27–272 (SYGYASSPGK…DNITCVVVRF (246 aa)). Mn(2+)-binding residues include Asp63, Gly64, Asp224, and Asp263.

It belongs to the PP2C family. It depends on Mg(2+) as a cofactor. Mn(2+) serves as cofactor.

It carries out the reaction O-phospho-L-seryl-[protein] + H2O = L-seryl-[protein] + phosphate. It catalyses the reaction O-phospho-L-threonyl-[protein] + H2O = L-threonyl-[protein] + phosphate. This chain is Probable protein phosphatase 2C 45, found in Oryza sativa subsp. japonica (Rice).